The primary structure comprises 152 residues: ARL14 effector protein-like (152 aa).

Residues 1–16 show a composition bias toward polar residues; the sequence is MTEPSQKNNSTQQELT. A disordered region spans residues 1–27; it reads MTEPSQKNNSTQQELTNHLFPEKSSQI.

The polypeptide is ARL14 effector protein-like (Arl14epl) (Mus musculus (Mouse)).